Consider the following 245-residue polypeptide: Orotidine 5'-phosphate decarboxylase (245 aa).

Residues aspartate 22, lysine 44, 71 to 80 (DLKFHDIPNT), threonine 131, arginine 192, glutamine 201, glycine 221, and arginine 222 contribute to the substrate site. Lysine 73 acts as the Proton donor in catalysis.

This sequence belongs to the OMP decarboxylase family. Type 1 subfamily. Homodimer.

It catalyses the reaction orotidine 5'-phosphate + H(+) = UMP + CO2. The protein operates within pyrimidine metabolism; UMP biosynthesis via de novo pathway; UMP from orotate: step 2/2. Functionally, catalyzes the decarboxylation of orotidine 5'-monophosphate (OMP) to uridine 5'-monophosphate (UMP). The chain is Orotidine 5'-phosphate decarboxylase from Salmonella typhimurium (strain LT2 / SGSC1412 / ATCC 700720).